Consider the following 369-residue polypeptide: Delta(6)-protoilludene synthase STEHIDRAFT_73029 (369 aa).

4 residues coordinate Mg(2+): D107, N243, S247, and E251. The D(D/E)XX(D/E) motif motif lies at 107 to 111 (DEYSD). An NSE motif motif is present at residues 243–251 (NDIVSYNLE). (2E,6E)-farnesyl diphosphate-binding residues include R333 and Y334.

It belongs to the terpene synthase family. It depends on Mg(2+) as a cofactor. Mn(2+) is required as a cofactor. Ca(2+) serves as cofactor. The cofactor is Ni(2+). Requires Co(2+) as cofactor.

It catalyses the reaction (2E,6E)-farnesyl diphosphate = Delta(6)-protoilludene + diphosphate. It carries out the reaction (2E,6E)-farnesyl diphosphate = alpha-selinene + diphosphate. Its activity is regulated as follows. Ca(2+) switches the cyclization mechanism of delta(6)-protoilludene synthase from 1,11 to 1,10 cyclization which leads to the production of beta-elemene. Its function is as follows. Terpene cyclase that catalyzes the cyclization of farnesyl diphosphate (FPP) to delta(6)-protoilludene. In presence of Ca(2+), a significant switch from 1,11 to a dual 1,11/1,10 cyclization occurs, producing beta-elemene as the major product, with lower levels of delta(6)-protoilludene and (E)-beta-caryophyllene, and traces of beta-selinene and alpha-selinene. This is Delta(6)-protoilludene synthase STEHIDRAFT_73029 from Stereum hirsutum (strain FP-91666) (White-rot fungus).